A 1174-amino-acid chain; its full sequence is Pesticidal crystal protein Cry1Fa (1174 aa).

It belongs to the delta endotoxin family.

In terms of biological role, promotes colloidosmotic lysis by binding to the midgut epithelial cells of many lepidopteran larvae. In Bacillus thuringiensis subsp. aizawai, this protein is Pesticidal crystal protein Cry1Fa (cry1Fa).